A 269-amino-acid polypeptide reads, in one-letter code: Formamidopyrimidine-DNA glycosylase (269 aa).

The active-site Schiff-base intermediate with DNA is the Pro2. Glu3 (proton donor) is an active-site residue. Lys57 serves as the catalytic Proton donor; for beta-elimination activity. His90, Arg109, and Arg150 together coordinate DNA. An FPG-type zinc finger spans residues 235 to 269 (NVYGRKGEPCEACGKAIESKVIGQRNTFFCTRCQR). Arg259 (proton donor; for delta-elimination activity) is an active-site residue.

It belongs to the FPG family. As to quaternary structure, monomer. Requires Zn(2+) as cofactor.

It catalyses the reaction Hydrolysis of DNA containing ring-opened 7-methylguanine residues, releasing 2,6-diamino-4-hydroxy-5-(N-methyl)formamidopyrimidine.. It carries out the reaction 2'-deoxyribonucleotide-(2'-deoxyribose 5'-phosphate)-2'-deoxyribonucleotide-DNA = a 3'-end 2'-deoxyribonucleotide-(2,3-dehydro-2,3-deoxyribose 5'-phosphate)-DNA + a 5'-end 5'-phospho-2'-deoxyribonucleoside-DNA + H(+). Involved in base excision repair of DNA damaged by oxidation or by mutagenic agents. Acts as a DNA glycosylase that recognizes and removes damaged bases. Has a preference for oxidized purines, such as 7,8-dihydro-8-oxoguanine (8-oxoG). Has AP (apurinic/apyrimidinic) lyase activity and introduces nicks in the DNA strand. Cleaves the DNA backbone by beta-delta elimination to generate a single-strand break at the site of the removed base with both 3'- and 5'-phosphates. This chain is Formamidopyrimidine-DNA glycosylase, found in Alteromonas mediterranea (strain DSM 17117 / CIP 110805 / LMG 28347 / Deep ecotype).